A 457-amino-acid chain; its full sequence is MADS-box transcription factor 1 (457 aa).

Positions 11 to 71 (PSSPRRSIQR…NACHVYSSEE (61 aa)) constitute an MADS-box domain. 2 disordered regions span residues 195–278 (SGDY…SRLH) and 295–328 (SSGYLDPSSTPITPLDSAINQITPPFLPDNLGQE). Residues 199 to 216 (SDSPLEPSSSSSFSVPPE) show a composition bias toward low complexity. A compositionally biased stretch (polar residues) spans 218-234 (LNPTLSFQHNDVPQTDN). A compositionally biased stretch (basic residues) spans 265-278 (KNRRNGKPRISRLH). The segment covering 295 to 317 (SSGYLDPSSTPITPLDSAINQIT) has biased composition (polar residues). Ser372 is subject to Phosphoserine.

Phosphorylated. Occurs periodically during mitosis.

The protein resides in the nucleus. Functionally, acts as a transcriptional activator with a role in the regulation of mitosis. Regulates septation and the periodic transcription of cdc15. This Schizosaccharomyces pombe (strain 972 / ATCC 24843) (Fission yeast) protein is MADS-box transcription factor 1 (mbx1).